The primary structure comprises 110 residues: Quaternary ammonium compound-resistance protein QacF (110 aa).

The next 4 membrane-spanning stretches (helical) occupy residues 1-21 (MKNW…TSAL), 31-51 (VPSV…SLAL), 58-78 (IAYA…AWIF), and 85-105 (FWAF…NLLS).

This sequence belongs to the drug/metabolite transporter (DMT) superfamily. Small multidrug resistance (SMR) (TC 2.A.7.1) family.

The protein localises to the cell membrane. Its function is as follows. Multidrug exporter. Is implicated for the resistance to bacteriocidal quaternary ammonium compounds. The chain is Quaternary ammonium compound-resistance protein QacF (qacF) from Klebsiella aerogenes (Enterobacter aerogenes).